A 909-amino-acid polypeptide reads, in one-letter code: Protein translocase subunit SecA (909 aa).

Residues glutamine 87, 105-109, and aspartate 507 contribute to the ATP site; that span reads GEGKT. The interval 834-909 is disordered; the sequence is EAVEEQRRRQ…KYKQCCGKLS (76 aa). The span at 837–848 shows a compositional bias: basic and acidic residues; sequence EEQRRRQGDMQY. Residues 859-871 are compositionally biased toward gly residues; it reads QGAGGEGAAGGTA. 4 residues coordinate Zn(2+): cysteine 893, cysteine 895, cysteine 904, and cysteine 905.

This sequence belongs to the SecA family. As to quaternary structure, monomer and homodimer. Part of the essential Sec protein translocation apparatus which comprises SecA, SecYEG and auxiliary proteins SecDF-YajC and YidC. It depends on Zn(2+) as a cofactor.

The protein localises to the cell inner membrane. It is found in the cytoplasm. It catalyses the reaction ATP + H2O + cellular proteinSide 1 = ADP + phosphate + cellular proteinSide 2.. Part of the Sec protein translocase complex. Interacts with the SecYEG preprotein conducting channel. Has a central role in coupling the hydrolysis of ATP to the transfer of proteins into and across the cell membrane, serving both as a receptor for the preprotein-SecB complex and as an ATP-driven molecular motor driving the stepwise translocation of polypeptide chains across the membrane. The chain is Protein translocase subunit SecA from Alkalilimnicola ehrlichii (strain ATCC BAA-1101 / DSM 17681 / MLHE-1).